A 140-amino-acid polypeptide reads, in one-letter code: ATP synthase epsilon chain (140 aa).

It belongs to the ATPase epsilon chain family. F-type ATPases have 2 components, CF(1) - the catalytic core - and CF(0) - the membrane proton channel. CF(1) has five subunits: alpha(3), beta(3), gamma(1), delta(1), epsilon(1). CF(0) has three main subunits: a, b and c.

Its subcellular location is the cell inner membrane. Produces ATP from ADP in the presence of a proton gradient across the membrane. In Xylella fastidiosa (strain Temecula1 / ATCC 700964), this protein is ATP synthase epsilon chain.